Here is a 106-residue protein sequence, read N- to C-terminus: Small ribosomal subunit protein uS10 (106 aa).

It belongs to the universal ribosomal protein uS10 family. Part of the 30S ribosomal subunit.

Involved in the binding of tRNA to the ribosomes. The polypeptide is Small ribosomal subunit protein uS10 (Pyrobaculum islandicum (strain DSM 4184 / JCM 9189 / GEO3)).